Consider the following 341-residue polypeptide: GTPase Obg (341 aa).

The 159-residue stretch at 1-159 (MKFLDQAKVY…RAIWLRLKLI (159 aa)) folds into the Obg domain. The 168-residue stretch at 160–327 (ADAGLVGLPN…VLRAGAHIIE (168 aa)) folds into the OBG-type G domain. GTP is bound by residues 166–173 (GLPNAGKS), 191–195 (FTTLH), 212–215 (DIPG), 279–282 (SQID), and 308–310 (SAV). Positions 173 and 193 each coordinate Mg(2+).

It belongs to the TRAFAC class OBG-HflX-like GTPase superfamily. OBG GTPase family. In terms of assembly, monomer. Mg(2+) is required as a cofactor.

The protein resides in the cytoplasm. Functionally, an essential GTPase which binds GTP, GDP and possibly (p)ppGpp with moderate affinity, with high nucleotide exchange rates and a fairly low GTP hydrolysis rate. Plays a role in control of the cell cycle, stress response, ribosome biogenesis and in those bacteria that undergo differentiation, in morphogenesis control. In Bartonella tribocorum (strain CIP 105476 / IBS 506), this protein is GTPase Obg.